The primary structure comprises 322 residues: NADH-cytochrome b5 reductase 2 (322 aa).

Residues 32-48 (LAPIYISVGLAGLGVGL) traverse the membrane as a helical segment. The 105-residue stretch at 72–176 (QGWVDLKLSE…KGPIPKYPWE (105 aa)) folds into the FAD-binding FR-type domain. 179–214 (KHKHICLIAGGTGITPMYQLARQIFKNPEDQTKVTL) contributes to the FAD binding site.

This sequence belongs to the flavoprotein pyridine nucleotide cytochrome reductase family. It depends on FAD as a cofactor.

The protein localises to the mitochondrion outer membrane. It catalyses the reaction 2 Fe(III)-[cytochrome b5] + NADH = 2 Fe(II)-[cytochrome b5] + NAD(+) + H(+). Functionally, may mediate the reduction of outer membrane cytochrome b5. This is NADH-cytochrome b5 reductase 2 (mcr1) from Aspergillus clavatus (strain ATCC 1007 / CBS 513.65 / DSM 816 / NCTC 3887 / NRRL 1 / QM 1276 / 107).